Reading from the N-terminus, the 390-residue chain is MVKLLELFITSSKPVVEILLITSVGFYMALDGVNLLGHDARKYLNNIVFYVFSPSLIGSRLADSVTYESLVKMWFMPVNVLLTFIIGSLLGWIVIVITKPPSHLRGLILGCCAAGNLGNMPLIIIPAVCKEKGGPFGDPESCQKYGMGYVALSMAMGSIYIWTYVYNLMRVLSNSPVETPPSVESNYDSYKVPLISSKEEENNQKAGRWEKVKRRLVSLSQKVNLKTIFAPSTIAAMIALVIGLITPLRKLIIGTEAPLRVLQDSVTLVGDGAVPAMTMIIGGNLLKGLRSSGMKMSSIIGVLVARYVLLPMSGVLIVRGAYKLDLVTSEPLYQFVLLLQYAVPPAMNLGTITQLFGTGESECSVIMLWTYSLASIALTVWPTFFMWLVA.

The Lumenal segment spans residues 1–14; it reads MVKLLELFITSSKP. Residues 15 to 35 traverse the membrane as a helical segment; sequence VVEILLITSVGFYMALDGVNL. The Cytoplasmic segment spans residues 36-43; that stretch reads LGHDARKY. Residues 44-61 traverse the membrane as a helical segment; that stretch reads LNNIVFYVFSPSLIGSRL. Residues 62 to 76 are Lumenal-facing; it reads ADSVTYESLVKMWFM. The chain crosses the membrane as a helical span at residues 77 to 97; the sequence is PVNVLLTFIIGSLLGWIVIVI. Over 98–107 the chain is Cytoplasmic; it reads TKPPSHLRGL. The helical transmembrane segment at 108 to 128 threads the bilayer; the sequence is ILGCCAAGNLGNMPLIIIPAV. Topologically, residues 129-144 are lumenal; that stretch reads CKEKGGPFGDPESCQK. A helical transmembrane segment spans residues 145-165; sequence YGMGYVALSMAMGSIYIWTYV. Residues 166–227 are Cytoplasmic-facing; it reads YNLMRVLSNS…SLSQKVNLKT (62 aa). Residues 228-248 form a helical membrane-spanning segment; that stretch reads IFAPSTIAAMIALVIGLITPL. Residues 249-265 are Lumenal-facing; that stretch reads RKLIIGTEAPLRVLQDS. The chain crosses the membrane as a helical span at residues 266-286; it reads VTLVGDGAVPAMTMIIGGNLL. The Cytoplasmic portion of the chain corresponds to 287 to 297; it reads KGLRSSGMKMS. A helical membrane pass occupies residues 298-318; the sequence is SIIGVLVARYVLLPMSGVLIV. The Lumenal segment spans residues 319 to 331; that stretch reads RGAYKLDLVTSEP. Residues 332-352 form a helical membrane-spanning segment; it reads LYQFVLLLQYAVPPAMNLGTI. Residues 353 to 364 are Cytoplasmic-facing; it reads TQLFGTGESECS. Residues 365–385 traverse the membrane as a helical segment; that stretch reads VIMLWTYSLASIALTVWPTFF. Residues 386–390 lie on the Lumenal side of the membrane; that stretch reads MWLVA.

Belongs to the auxin efflux carrier (TC 2.A.69.2) family. As to expression, expressed in seedlings, rosette and cauline leaves, flowers and siliques.

It is found in the endoplasmic reticulum membrane. Its function is as follows. Involved in cellular auxin homeostasis by regulating auxin metabolism. Regulates intracellular auxin accumulation at the endoplasmic reticulum and thus auxin availability for nuclear auxin signaling. The polypeptide is Protein PIN-LIKES 3 (PILS3) (Arabidopsis thaliana (Mouse-ear cress)).